The following is a 357-amino-acid chain: 3-isopropylmalate dehydrogenase (357 aa).

76-89 (GYQWESLDISVRPE) provides a ligand contact to NAD(+). Substrate is bound by residues arginine 96, arginine 106, arginine 134, and aspartate 224. Residues aspartate 224, aspartate 248, and aspartate 252 each contribute to the Mg(2+) site. Residue 282 to 294 (GSAPDIAGQNIAN) participates in NAD(+) binding.

The protein belongs to the isocitrate and isopropylmalate dehydrogenases family. LeuB type 1 subfamily. Homodimer. Mg(2+) serves as cofactor. The cofactor is Mn(2+).

It is found in the cytoplasm. It carries out the reaction (2R,3S)-3-isopropylmalate + NAD(+) = 4-methyl-2-oxopentanoate + CO2 + NADH. It functions in the pathway amino-acid biosynthesis; L-leucine biosynthesis; L-leucine from 3-methyl-2-oxobutanoate: step 3/4. Functionally, catalyzes the oxidation of 3-carboxy-2-hydroxy-4-methylpentanoate (3-isopropylmalate) to 3-carboxy-4-methyl-2-oxopentanoate. The product decarboxylates to 4-methyl-2 oxopentanoate. In Hydrogenovibrio crunogenus (strain DSM 25203 / XCL-2) (Thiomicrospira crunogena), this protein is 3-isopropylmalate dehydrogenase.